The chain runs to 242 residues: Putative ABC transporter ATP-binding protein TTE0246 (242 aa).

Residues Phe5–Ile242 enclose the ABC transporter domain. ATP is bound at residue Gly38–Ser45.

The protein belongs to the ABC transporter superfamily.

Its subcellular location is the cell membrane. In terms of biological role, probably part of an ABC transporter complex. Responsible for energy coupling to the transport system. The polypeptide is Putative ABC transporter ATP-binding protein TTE0246 (Caldanaerobacter subterraneus subsp. tengcongensis (strain DSM 15242 / JCM 11007 / NBRC 100824 / MB4) (Thermoanaerobacter tengcongensis)).